Reading from the N-terminus, the 274-residue chain is uncharacterized protein (274 aa).

This is an uncharacterized protein from Invertebrate iridescent virus 6 (IIV-6).